The sequence spans 131 residues: MTVTDPIADMLVRIKNANMRRHPTVDVPYSKMKEKIIEILLREGYIAKYEVIGEIPQKYIRVYLKYKGKTPVIQDVKRVSKPGRRYYVNKEEIPRVLGGLGIAILSTSKGIMTDKEARLLGIGGELICMVW.

The protein belongs to the universal ribosomal protein uS8 family. Part of the 30S ribosomal subunit. Contacts proteins S5 and S12.

In terms of biological role, one of the primary rRNA binding proteins, it binds directly to 16S rRNA central domain where it helps coordinate assembly of the platform of the 30S subunit. This Dictyoglomus turgidum (strain DSM 6724 / Z-1310) protein is Small ribosomal subunit protein uS8.